The primary structure comprises 406 residues: Putative ankyrin repeat protein RF_0266 (406 aa).

ANK repeat units follow at residues 68–98, 103–129, 130–161, 163–189, and 203–232; these read TSHS…DINN, NYIT…QDDI, KVQN…IIKP, HIEL…DIEK, and SIDC…KPEQ.

The sequence is that of Putative ankyrin repeat protein RF_0266 from Rickettsia felis (strain ATCC VR-1525 / URRWXCal2) (Rickettsia azadi).